We begin with the raw amino-acid sequence, 575 residues long: Proline--tRNA ligase (575 aa).

This sequence belongs to the class-II aminoacyl-tRNA synthetase family. ProS type 1 subfamily. As to quaternary structure, homodimer.

It localises to the cytoplasm. The catalysed reaction is tRNA(Pro) + L-proline + ATP = L-prolyl-tRNA(Pro) + AMP + diphosphate. Its function is as follows. Catalyzes the attachment of proline to tRNA(Pro) in a two-step reaction: proline is first activated by ATP to form Pro-AMP and then transferred to the acceptor end of tRNA(Pro). As ProRS can inadvertently accommodate and process non-cognate amino acids such as alanine and cysteine, to avoid such errors it has two additional distinct editing activities against alanine. One activity is designated as 'pretransfer' editing and involves the tRNA(Pro)-independent hydrolysis of activated Ala-AMP. The other activity is designated 'posttransfer' editing and involves deacylation of mischarged Ala-tRNA(Pro). The misacylated Cys-tRNA(Pro) is not edited by ProRS. The polypeptide is Proline--tRNA ligase (Anaeromyxobacter sp. (strain Fw109-5)).